Here is a 223-residue protein sequence, read N- to C-terminus: Phosphoribosylformylglycinamidine synthase subunit PurQ (223 aa).

The region spanning 2-223 is the Glutamine amidotransferase type-1 domain; that stretch reads KVAIIRFPGT…LLENFINFNF (222 aa). Cys-84 functions as the Nucleophile in the catalytic mechanism. Residues His-192 and Glu-194 contribute to the active site.

In terms of assembly, part of the FGAM synthase complex composed of 1 PurL, 1 PurQ and 2 PurS subunits.

Its subcellular location is the cytoplasm. It carries out the reaction N(2)-formyl-N(1)-(5-phospho-beta-D-ribosyl)glycinamide + L-glutamine + ATP + H2O = 2-formamido-N(1)-(5-O-phospho-beta-D-ribosyl)acetamidine + L-glutamate + ADP + phosphate + H(+). It catalyses the reaction L-glutamine + H2O = L-glutamate + NH4(+). It participates in purine metabolism; IMP biosynthesis via de novo pathway; 5-amino-1-(5-phospho-D-ribosyl)imidazole from N(2)-formyl-N(1)-(5-phospho-D-ribosyl)glycinamide: step 1/2. Its function is as follows. Part of the phosphoribosylformylglycinamidine synthase complex involved in the purines biosynthetic pathway. Catalyzes the ATP-dependent conversion of formylglycinamide ribonucleotide (FGAR) and glutamine to yield formylglycinamidine ribonucleotide (FGAM) and glutamate. The FGAM synthase complex is composed of three subunits. PurQ produces an ammonia molecule by converting glutamine to glutamate. PurL transfers the ammonia molecule to FGAR to form FGAM in an ATP-dependent manner. PurS interacts with PurQ and PurL and is thought to assist in the transfer of the ammonia molecule from PurQ to PurL. The protein is Phosphoribosylformylglycinamidine synthase subunit PurQ of Campylobacter jejuni subsp. jejuni serotype O:2 (strain ATCC 700819 / NCTC 11168).